Consider the following 479-residue polypeptide: MPIVARSSRVPWVIKYRPKRVEDVVNQDQAKKILVPWFKAWLEGRKPDKRAALLYGPPGVGKTSLVEAIASEFNLEMIELNASDYRRRSDIERIVGAASRKRSMFKRGVVILLDEVDGINPREDAGGIEALLSVIKTTENPIVMTANDPWKDFLRPLREVSLMVEFRPLTLTHIVAVLQRICEAERIECEREALRYIAERSEGDLRSAINDLQAVAEGYGRVTLTLAREIVRGREKSIDIWRTLNQVFYKPRQAWMARKAVSQSEKDYEELIAWINDNIPRKYGEPSDLFRAFDALARATVFLGRAKFGGNWELLSYVFDLMGPGVAYARMEGEVLKTRYSYPEKIRMMAQLRGVRETREKLAEVLAKRLLMSRRAVKTEVLPILHYIFRSSRDPTKPAMIALEYGLTEKMVELLAGQRKSEILKAMATVKKARLGEKPLEPQEAKARRRGEKASRDEGRKAGKRERKGVGLDFFLGEQ.

56-63 (GPPGVGKT) is a binding site for ATP. Positions 435–461 (LGEKPLEPQEAKARRRGEKASRDEGRK) are enriched in basic and acidic residues. The disordered stretch occupies residues 435–479 (LGEKPLEPQEAKARRRGEKASRDEGRKAGKRERKGVGLDFFLGEQ).

Belongs to the activator 1 small subunits family. RfcL subfamily. In terms of assembly, heteromultimer composed of small subunits (RfcS) and large subunits (RfcL).

In terms of biological role, part of the RFC clamp loader complex which loads the PCNA sliding clamp onto DNA. The protein is Replication factor C large subunit of Aeropyrum pernix (strain ATCC 700893 / DSM 11879 / JCM 9820 / NBRC 100138 / K1).